The following is a 217-amino-acid chain: Small ribosomal subunit protein uS3c (217 aa).

Residues 39–109 (IRSCIEKQLH…QIRINLIEIT (71 aa)) enclose the KH type-2 domain.

Belongs to the universal ribosomal protein uS3 family. As to quaternary structure, part of the 30S ribosomal subunit.

Its subcellular location is the plastid. The protein localises to the chloroplast. The sequence is that of Small ribosomal subunit protein uS3c (rps3) from Gracilaria tenuistipitata var. liui (Red alga).